A 515-amino-acid polypeptide reads, in one-letter code: Transcription termination factor Rho (515 aa).

The 76-residue stretch at 146-221 folds into the Rho RNA-BD domain; that stretch reads DVLFTGVLDV…VKIKSINDQD (76 aa). ATP contacts are provided by residues 264-269, 276-281, and Arg307; these read GKGQRA and KAGKTT.

The protein belongs to the Rho family. As to quaternary structure, homohexamer. The homohexamer assembles into an open ring structure.

Facilitates transcription termination by a mechanism that involves Rho binding to the nascent RNA, activation of Rho's RNA-dependent ATPase activity, and release of the mRNA from the DNA template. The sequence is that of Transcription termination factor Rho from Borreliella burgdorferi (strain ATCC 35210 / DSM 4680 / CIP 102532 / B31) (Borrelia burgdorferi).